The following is an 89-amino-acid chain: Small ribosomal subunit protein uS15 (89 aa).

This sequence belongs to the universal ribosomal protein uS15 family. Part of the 30S ribosomal subunit. Forms a bridge to the 50S subunit in the 70S ribosome, contacting the 23S rRNA.

Its function is as follows. One of the primary rRNA binding proteins, it binds directly to 16S rRNA where it helps nucleate assembly of the platform of the 30S subunit by binding and bridging several RNA helices of the 16S rRNA. Forms an intersubunit bridge (bridge B4) with the 23S rRNA of the 50S subunit in the ribosome. This Desulforapulum autotrophicum (strain ATCC 43914 / DSM 3382 / VKM B-1955 / HRM2) (Desulfobacterium autotrophicum) protein is Small ribosomal subunit protein uS15.